A 305-amino-acid polypeptide reads, in one-letter code: Methionyl-tRNA formyltransferase (305 aa).

111-114 (SLLP) provides a ligand contact to (6S)-5,6,7,8-tetrahydrofolate.

The protein belongs to the Fmt family.

It catalyses the reaction L-methionyl-tRNA(fMet) + (6R)-10-formyltetrahydrofolate = N-formyl-L-methionyl-tRNA(fMet) + (6S)-5,6,7,8-tetrahydrofolate + H(+). Its function is as follows. Attaches a formyl group to the free amino group of methionyl-tRNA(fMet). The formyl group appears to play a dual role in the initiator identity of N-formylmethionyl-tRNA by promoting its recognition by IF2 and preventing the misappropriation of this tRNA by the elongation apparatus. In Helicobacter pylori (strain P12), this protein is Methionyl-tRNA formyltransferase.